We begin with the raw amino-acid sequence, 379 residues long: Probable RNA 3'-terminal phosphate cyclase-like protein (379 aa).

This sequence belongs to the RNA 3'-terminal cyclase family. Type 2 subfamily. As to quaternary structure, part of the small subunit (SSU) processome, composed of more than 70 proteins and the RNA chaperone small nucleolar RNA (snoRNA) U3.

It is found in the nucleus. The protein localises to the nucleolus. In terms of biological role, part of the small subunit (SSU) processome, first precursor of the small eukaryotic ribosomal subunit. During the assembly of the SSU processome in the nucleolus, many ribosome biogenesis factors, an RNA chaperone and ribosomal proteins associate with the nascent pre-rRNA and work in concert to generate RNA folding, modifications, rearrangements and cleavage as well as targeted degradation of pre-ribosomal RNA by the RNA exosome. Does not have cyclase activity. This chain is Probable RNA 3'-terminal phosphate cyclase-like protein, found in Caenorhabditis elegans.